The chain runs to 130 residues: MHEMGIALQIAEIAKSAIPKTPADLKVKAVNLRVGKLTAIVPDSLRFCFEIVAKDTPLAEAELNIEEIPIVAVCKECYTETIITDADFSCEKCKSGKLDIISGRELTVSSIEVADPEEMKQAQKKSKKEK.

Ni(2+) is bound at residue H2. Residues C74, C77, C90, and C93 each contribute to the Zn(2+) site.

This sequence belongs to the HypA/HybF family.

Involved in the maturation of [NiFe] hydrogenases. Required for nickel insertion into the metal center of the hydrogenase. The sequence is that of Hydrogenase maturation factor HypA from Desulfatibacillum aliphaticivorans.